The sequence spans 315 residues: Methionyl-tRNA formyltransferase (315 aa).

(6S)-5,6,7,8-tetrahydrofolate is bound at residue 113 to 116 (SLLP).

Belongs to the Fmt family.

The enzyme catalyses L-methionyl-tRNA(fMet) + (6R)-10-formyltetrahydrofolate = N-formyl-L-methionyl-tRNA(fMet) + (6S)-5,6,7,8-tetrahydrofolate + H(+). In terms of biological role, attaches a formyl group to the free amino group of methionyl-tRNA(fMet). The formyl group appears to play a dual role in the initiator identity of N-formylmethionyl-tRNA by promoting its recognition by IF2 and preventing the misappropriation of this tRNA by the elongation apparatus. The protein is Methionyl-tRNA formyltransferase of Shigella sonnei (strain Ss046).